The primary structure comprises 879 residues: MIKSVLKVFGTQNDRIVKSYMKRVSNINVLESTYEPMSDEELQVAFNALRESVKSGEKSMEDVLYDSFAITREASKRVLGLRHYDVQMVGGMVLHDGNIAEMKTGEGKTLVATLAVVLNAMTGKGVHVVTVNDYLAKRDSSEMGELYNFLGYSVGCITADIQDDAGRKAQYDADITYGTNNEYGFDYLRDNMKVRLEEKVQREHNYAIVDEVDSILIDEARTPLIISGPTQRDQNHYARADAIAKQMERGEKIETKPGEDEKTTGDFIVDEKNRTIVMTEQGLQKAQDLFEVDNLYSLENAVLSHHLDQALKAHNIFEKDVDYVVQDNEIIIVDEFTGRLSEGRRYSEGLHQALEAKEGVEIQEESQTLAEITYQNYFRLYNKLAGMTGTAQTEATEFSQIYGLDVISIPTNVPVERADRNDLIYNTEKEKLDAVVRKVKEYHSKGQPVLIGTASIEKSEMIHERLKKEKIPHNILNAKNHAQEAEIIKNAGQKGAVTVATNMAGRGVDIKIDDEVRSLGGLAILGTERHESRRIDNQLRGRSGRQGDLGESQFFLSLDDNLLRIFGGEKIRNIMNRLGVEEGEYIDSKIVTRSVEKAQKKVENQHYESRKHILEYDDVANHQRKAIYAFRNQLLDPEFDIDAKIKENRAEYVHHMLAEAEIFEGMPKEDFDIEKLAALIKEELRIEVDPQYFKDKETEELEAMITEMMENIYEEKMSQLEPAQRNEIERILYLQVLDPQWRDHLYEMDVLKTGIGLRGYNQKDPLTEYKQDSYKLFTDLVERIKLEAVKVLHLVQFDFTSPEEEEEAIEQIREELESEVADASLNQSFEEGVIAEDSEKLKPITGTKKPKRNDPCPCGSGKKYKNCCGQSGPKKGLLA.

Residues Gln87, 105–109 (GEGKT), and Asp509 each bind ATP. The tract at residues 834–879 (IAEDSEKLKPITGTKKPKRNDPCPCGSGKKYKNCCGQSGPKKGLLA) is disordered. Positions 856, 858, 867, and 868 each coordinate Zn(2+).

It belongs to the SecA family. Monomer and homodimer. Part of the essential Sec protein translocation apparatus which comprises SecA, SecYEG and auxiliary proteins SecDF-YajC and YidC. It depends on Zn(2+) as a cofactor.

The protein resides in the cell inner membrane. It localises to the cytoplasm. The enzyme catalyses ATP + H2O + cellular proteinSide 1 = ADP + phosphate + cellular proteinSide 2.. In terms of biological role, part of the Sec protein translocase complex. Interacts with the SecYEG preprotein conducting channel. Has a central role in coupling the hydrolysis of ATP to the transfer of proteins into and across the cell membrane, serving as an ATP-driven molecular motor driving the stepwise translocation of polypeptide chains across the membrane. This Sulfurovum sp. (strain NBC37-1) protein is Protein translocase subunit SecA.